We begin with the raw amino-acid sequence, 714 residues long: Inducible lysine decarboxylase (714 aa).

Lys-367 is modified (N6-(pyridoxal phosphate)lysine).

It belongs to the Orn/Lys/Arg decarboxylase class-I family. As to quaternary structure, homodecamer. Interacts with RavA. Requires pyridoxal 5'-phosphate as cofactor.

The protein resides in the cytoplasm. It catalyses the reaction L-lysine + H(+) = cadaverine + CO2. The protein is Inducible lysine decarboxylase (cadA) of Salmonella typhi.